Consider the following 140-residue polypeptide: Large ribosomal subunit protein uL16 (140 aa).

The segment covering 1–14 has biased composition (basic residues); sequence MLMPKKVKHRKQMK. A disordered region spans residues 1–20; it reads MLMPKKVKHRKQMKGRMSGT.

Belongs to the universal ribosomal protein uL16 family. Part of the 50S ribosomal subunit.

Its function is as follows. Binds 23S rRNA and is also seen to make contacts with the A and possibly P site tRNAs. In Geotalea daltonii (strain DSM 22248 / JCM 15807 / FRC-32) (Geobacter daltonii), this protein is Large ribosomal subunit protein uL16.